We begin with the raw amino-acid sequence, 542 residues long: Cytochrome P450 79B1 (542 aa).

A helical transmembrane segment spans residues 21–41; that stretch reads FSNMYLLTTLQAFVAITLVML. Cys-478 serves as a coordination point for heme.

The protein belongs to the cytochrome P450 family. Heme serves as cofactor.

The protein localises to the membrane. Converts tyrosine to para-hydrophenylacetaldoxime in para-hydroxybenzylglucosinolate biosynthesis. The sequence is that of Cytochrome P450 79B1 (CYP79B1) from Sinapis alba (White mustard).